Consider the following 745-residue polypeptide: Cellulose synthase-like protein E2 (745 aa).

Positions 1–14 (MAGSGGGVVSGGRQ) are enriched in gly residues. The segment at 1 to 20 (MAGSGGGVVSGGRQRGPPLF) is disordered. Transmembrane regions (helical) follow at residues 29–49 (AMAA…LIWL) and 66–86 (WAWL…VLTL). Active-site residues include D155 and D458. The next 5 membrane-spanning stretches (helical) occupy residues 541–561 (FPTL…ISLF), 568–588 (WFIP…AESL), 658–678 (AMFV…VLGI), 686–706 (GPGG…IVAI), and 723–743 (LPAS…ILSI).

It belongs to the glycosyltransferase 2 family. Plant cellulose synthase-like E subfamily.

Its subcellular location is the golgi apparatus membrane. Functionally, thought to be a Golgi-localized beta-glycan synthase that polymerize the backbones of noncellulosic polysaccharides (hemicelluloses) of plant cell wall. This Oryza sativa subsp. japonica (Rice) protein is Cellulose synthase-like protein E2 (CSLE2).